We begin with the raw amino-acid sequence, 136 residues long: MHQTSMGIKMESHTLVFISILLCLYGADGNIVMTQSPKSMSMSVGERVTLTCKASENVVTYVSWYQQKPEQSPKLLIYGASNRYTGVPDRFTGSGSATDFTLTISSVQAEDLADYHCGQGYSYPYTFGGGTKLEIK.

Positions 1–29 (MHQTSMGIKMESHTLVFISILLCLYGADG) are cleaved as a signal peptide. Residues 30-52 (NIVMTQSPKSMSMSVGERVTLTC) form a framework-1 region. Residues 53 to 63 (KASENVVTYVS) are complementarity-determining-1. The framework-2 stretch occupies residues 64-78 (WYQQKPEQSPKLLIY). The tract at residues 79–85 (GASNRYT) is complementarity-determining-2. The interval 86 to 117 (GVPDRFTGSGSATDFTLTISSVQAEDLADYHC) is framework-3. The segment at 118–126 (GQGYSYPYT) is complementarity-determining-3. Residues 127–136 (FGGGTKLEIK) are framework-4.

The protein is Ig kappa chain V-V region MOPC 21 of Mus musculus (Mouse).